Here is a 230-residue protein sequence, read N- to C-terminus: Urease accessory protein UreF (230 aa).

Belongs to the UreF family. UreD, UreF and UreG form a complex that acts as a GTP-hydrolysis-dependent molecular chaperone, activating the urease apoprotein by helping to assemble the nickel containing metallocenter of UreC. The UreE protein probably delivers the nickel.

The protein resides in the cytoplasm. Its function is as follows. Required for maturation of urease via the functional incorporation of the urease nickel metallocenter. This Cupriavidus necator (strain ATCC 17699 / DSM 428 / KCTC 22496 / NCIMB 10442 / H16 / Stanier 337) (Ralstonia eutropha) protein is Urease accessory protein UreF.